We begin with the raw amino-acid sequence, 2070 residues long: Multiple PDZ domain protein (2070 aa).

The region spanning 1–63 (MLEAIDKNRA…SVQQLKDQVN (63 aa)) is the L27 domain. Residues 137 to 224 (VFELLKPPSG…TVQLVIARGS (88 aa)) form the PDZ 1 domain. S230 is modified (phosphoserine). PDZ domains are found at residues 257–337 (TIEL…ARGA) and 377–463 (DVEL…MRRG). Residue S483 is modified to Phosphoserine. PDZ domains lie at 553-634 (VAHV…CRRT) and 700-786 (HIEL…VAKP). Phosphoserine occurs at positions 790 and 1078. The PDZ 6 domain occupies 1008-1089 (TINIAKGNSS…IGPDIKITYV (82 aa)). Residues 1121 to 1140 (DIPELPEREEGEGEESELQN) are disordered. In terms of domain architecture, PDZ 7 spans 1151 to 1243 (RVELWREPSK…PVVFMVQSII (93 aa)). R1170 carries the post-translational modification Omega-N-methylarginine. The disordered stretch occupies residues 1278-1324 (ADKAPSQSESEPEKAPLCSVPPPPPSAFAEMGSDHTQSSASKISQDV). Polar residues predominate over residues 1311–1321 (DHTQSSASKIS). PDZ domains follow at residues 1350 to 1433 (MIEL…IRNK) and 1483 to 1564 (HLEL…HAEN). Residues 1567–1612 (SQAVPSAAGAASGEKKNSSQSLMVPQSGSPEPESIRNTSRSSTPAI) are disordered. A compositionally biased stretch (polar residues) spans 1584–1610 (SSQSLMVPQSGSPEPESIRNTSRSSTP). 2 consecutive PDZ domains span residues 1629-1712 (TIEI…YRDE) and 1725-1807 (TIEL…GRIK). S1818 and S1824 each carry phosphoserine. PDZ domains follow at residues 1862–1948 (TVEM…VAGG) and 1987–2070 (SITL…MVLS).

As to quaternary structure, interacts with CLDN5, DLG4, GRIN1, F11R/JAM, CLDN1, NG2, CRB1, MPP4 and PALS1. Interacts with HTR2A, HTR2B, HTR2C, PLEKHA1/TAPP1, PLEKHA2/TAPP2, CXADR, SYNGAP1, CAMK2A and CAMK2B. Interacts with FAT4 (via cytoplasmic domain). Interacts with DLL1. In terms of assembly, (Microbial infection) Interacts with human adenovirus type 9 E4-ORF1 protein. (Microbial infection) Interacts with human papillomavirus 18/HPV18 protein E6. In terms of tissue distribution, expressed in heart, brain, placenta, liver, skeletal muscle, kidney and pancreas.

It localises to the cell membrane. The protein localises to the apical cell membrane. The protein resides in the postsynaptic density. It is found in the cell projection. Its subcellular location is the dendrite. It localises to the cell junction. The protein localises to the tight junction. The protein resides in the synapse. It is found in the synaptosome. Its function is as follows. Member of the NMDAR signaling complex that may play a role in control of AMPAR potentiation and synaptic plasticity in excitatory synapses. Promotes clustering of HT2RC at the cell surface. The sequence is that of Multiple PDZ domain protein (MPDZ) from Homo sapiens (Human).